A 317-amino-acid chain; its full sequence is MTSKNFLSQLPPVLKLWWWIISLVVAFLPLGLHGLIIINAIFFALVIVVERKLKTFAIIFGWLLFFFWFNIVVNGFIFLPNSSALASQNENFLGHFIYSGGEQFGGVSWWSVNTRSLLRSLVIALRISMLFATSFLLTASTSIYELAFGVERLCTPLRYLKIKTQPLSILFALVFKLLPIVKGELKRIKQAQAIRGFKYGKLAFLNPVKLKTLFIPVLLSTVKKTEAVAFALQAKGYQLDNPNKTHYLQKYNLWGGIVFLGLFVLLSCLLMVNNWHLVYWTNPHYSFTFTHQNFCFFKQISSPQLLAFWQLELLAIG.

The next 7 helical transmembrane spans lie at 18-38 (WWII…LIII), 58-78 (IIFG…GFIF), 92-112 (FLGH…WWSV), 130-150 (LFAT…AFGV), 165-185 (QPLS…KGEL), 202-222 (LAFL…LSTV), and 253-273 (LWGG…LMVN).

This sequence belongs to the CbiQ family.

Its subcellular location is the cell membrane. This is an uncharacterized protein from Mycoplasma pneumoniae (strain ATCC 29342 / M129 / Subtype 1) (Mycoplasmoides pneumoniae).